A 341-amino-acid chain; its full sequence is 4-hydroxy-2-oxovalerate aldolase (341 aa).

The region spanning 9-259 is the Pyruvate carboxyltransferase domain; sequence VRITEVCLRD…KLDIDLYKMM (251 aa). 17–18 serves as a coordination point for substrate; it reads RD. Aspartate 18 serves as a coordination point for Mn(2+). Histidine 21 (proton acceptor) is an active-site residue. Substrate-binding residues include serine 171 and histidine 198. Positions 198 and 200 each coordinate Mn(2+). Tyrosine 289 is a substrate binding site.

The protein belongs to the 4-hydroxy-2-oxovalerate aldolase family.

It catalyses the reaction (S)-4-hydroxy-2-oxopentanoate = acetaldehyde + pyruvate. This is 4-hydroxy-2-oxovalerate aldolase (dmpG) from Bacillus cereus (strain 03BB102).